Reading from the N-terminus, the 140-residue chain is UPF0179 protein Msp_0996 (140 aa).

This sequence belongs to the UPF0179 family.

The chain is UPF0179 protein Msp_0996 from Methanosphaera stadtmanae (strain ATCC 43021 / DSM 3091 / JCM 11832 / MCB-3).